A 411-amino-acid polypeptide reads, in one-letter code: Na(+)/H(+) antiporter NhaA 2 (411 aa).

Transmembrane regions (helical) follow at residues 18 to 38, 59 to 79, 97 to 117, 127 to 147, 167 to 187, 218 to 238, 261 to 281, 297 to 317, 338 to 358, and 366 to 386; these read VGGS…NSPV, LTVG…VAGL, LLPI…AATI, GWAI…ALTG, LLAI…LWLL, WYCM…LGLL, PLSA…VALS, VIAG…WLAI, VLGA…LAGI, and IAKV…SALL.

The protein belongs to the NhaA Na(+)/H(+) (TC 2.A.33) antiporter family.

It localises to the cell membrane. It catalyses the reaction Na(+)(in) + 2 H(+)(out) = Na(+)(out) + 2 H(+)(in). Its function is as follows. Na(+)/H(+) antiporter that extrudes sodium in exchange for external protons. This is Na(+)/H(+) antiporter NhaA 2 from Rhodococcus jostii (strain RHA1).